The chain runs to 801 residues: MGKVSKSPGKGEKRIGKVGKKNGKSNAPTEGSNSGKASRFTMSERNLGLMQEIIRKDPESYKEEFLEQFNYFVQTMKLLHLQPEQSRQEMQSLVDSVLFLSGLAKHYPKESKQFSDSLFELLREQGAGLDPEVRMAFCKALVLLRNQDMIDPIILMETFFELVKVEDKVLRKFLLSSISAHLKRVYHKKKDVKMLGKIQNLCFSKMKDSRSIVARAAQLVCIDAFRRKFWRDARTANVIAQACFHKVAKIQVTSMKFFLGSENENGDAEDSDEMDSDAEDNTKTLKEVMTSFRNVKKTRKREKNVERAKKMISKKKKAKKEGRSKECNLMAIQSLYDPQEFVDRLFGAVEAKKMDNFEVRLFKIALCARIIGIHRLHTLSFYSYLHRFLQPKQRDVTKILLYAAQACHEMVPPDTVEQLIRVIANNFVTDRNSPEAMTVGINAIREILSNCPFAATEELLRDLSEYKTYKNKNVSMAARSLITLFRAVNPKLLARKDRGKPQEKDDEDEEYNGFARPKVHDFISGAEILDEDAADGEQGHLEEDGTDSELDVSDVDTDDVDTDDDADEPVAKKKRVEQKSVENDAESDADDEEIEDEEEMDDEEEEIEISDEEEEEIDDEAEEEAVVEEEASEAVEKDPKLKASKNSMDRIMTQEDFKNIKAYQLKKQLIGEKRLKKQMGKGRSQADERIVDEMAEKLELKRSSDGLARLSDIEHFYKKKRQSKEERMADVMAGRADEDYKFGRPKKNGAHVGRTNDQNSKKKVFAMVKNKIRGRNRQRSFRDQQKSLRHYLMRQSGRKPQ.

Disordered regions lie at residues 1–40 (MGKV…ASRF), 495–517 (RKDR…FARP), 536–647 (GEQG…SKNS), and 739–801 (DYKF…RKPQ). Residues 24 to 40 (KSNAPTEGSNSGKASRF) show a composition bias toward polar residues. Acidic residues-rich tracts occupy residues 544 to 568 (DGTD…DADE) and 583 to 633 (NDAE…EASE). Composition is skewed to basic residues over residues 770 to 779 (NKIRGRNRQR) and 787 to 801 (SLRH…RKPQ).

It belongs to the SDA1 family.

It is found in the nucleus. Its function is as follows. Required for 60S pre-ribosomal subunits export to the cytoplasm. Required for normal somatic gonad development and for regulation of germline development and proliferation. This is Protein SDA1 homolog (pro-3) from Caenorhabditis elegans.